A 450-amino-acid polypeptide reads, in one-letter code: Paired box protein Pax-8 (450 aa).

Residues 9–135 constitute a DNA-binding region (paired); sequence GHGGLNQLGG…SSINRIIRTK (127 aa). The PAI subdomain stretch occupies residues 12–68; it reads GLNQLGGAFVNGRPLPEVVRQRIVDLAHQGVRPCDISRQLRVSHGCVSKILGRYYET. The tract at residues 87 to 135 is RED subdomain; sequence KVVEKIGDYKRQNPTMFAWEIRDRLLAEGVCDNDTVPSVSSINRIIRTK. Positions 159–182 are enriched in polar residues; the sequence is LIPSSAVTPPESPQSDSLGSTYSI. A disordered region spans residues 159–222; that stretch reads LIPSSAVTPP…QSSSSGPRKH (64 aa). At Ser-303 the chain carries Phosphoserine.

Interacts with WWTR1. In terms of tissue distribution, expressed in the excretory system, thyroid gland and Wilms tumors.

The protein localises to the nucleus. In terms of biological role, transcription factor for the thyroid-specific expression of the genes exclusively expressed in the thyroid cell type, maintaining the functional differentiation of such cells. The polypeptide is Paired box protein Pax-8 (PAX8) (Homo sapiens (Human)).